The primary structure comprises 222 residues: N-(5'-phosphoribosyl)anthranilate isomerase (222 aa).

Belongs to the TrpF family.

It carries out the reaction N-(5-phospho-beta-D-ribosyl)anthranilate = 1-(2-carboxyphenylamino)-1-deoxy-D-ribulose 5-phosphate. Its pathway is amino-acid biosynthesis; L-tryptophan biosynthesis; L-tryptophan from chorismate: step 3/5. The chain is N-(5'-phosphoribosyl)anthranilate isomerase from Xanthomonas campestris pv. campestris (strain 8004).